We begin with the raw amino-acid sequence, 758 residues long: MTILNHTLGFPRVGLKRELKKAQESYWAGNSTQEELLNVGRELRARHWQQQQQAGVDLVPVGDFAWYDHVLTTSLLLGNVPERHQNADGSIDIDTLFRIGRGRAPTGKPAAAAEMTKWFNTNYHYMVPEFQQGQQFKLGWTQLLDEVDEALALGHKIKPVLLGPITYLWLGKVKGEQFDRLSLLNDILPVYQQVLAELAKRGIEWVQIDEPALVLELPQEWLDAYQPAYQALQGQVKLLLTTYFDSIGHNIDTIRALPVQGLHVDVVAGHDDLAVLNKNLPKEWLLSLGVINGRNVWRADLSSWFERLQPLVNSRPLWLGSSCSLLHSPIDLNEETRLDAEVKSWFAFALQKCAELALLTQALNAPNDAKLAELAAYSAPIRARRSSSRVHNAQVEQRLAAITSQDIERQLPYEARAETQRKRFNLPAWPTTTIGSFPQTTEIRGLRLDFKQGRLDGKNYRTGISEHIKQAIAEQERLGLDVLVHGEAERNDMVEYFGEHLDGFVFTQNGWVQSYGSRCVKPPVIIGDISRPEAITVEWAKYAQSLTEKPVKGMLTGPVTILCWSFPREDVSRETIAKQIALALRDEVEDLEKAGIGIIQIDEPALREGLPLRRADWQAYLQWAVDAFKLNAAVAQNDTQIHTHMCYCEFNDIMDSIAALDADVITIETSRSDMELLESFEDFAYPNEIGPGVYDIHSPNVPSVEWIEALLRKAAQRIPAERLWVNPDCGLKTRGWPETRQALANMVLAAQRLREEQI.

5-methyltetrahydropteroyltri-L-glutamate is bound by residues 17-20 and K117; that span reads RELK. L-homocysteine is bound by residues 434-436 and E487; that span reads IGS. L-methionine contacts are provided by residues 434–436 and E487; that span reads IGS. Residues 518 to 519 and W564 contribute to the 5-methyltetrahydropteroyltri-L-glutamate site; that span reads RC. D602 provides a ligand contact to L-homocysteine. D602 provides a ligand contact to L-methionine. E608 lines the 5-methyltetrahydropteroyltri-L-glutamate pocket. Residues H644, C646, and E668 each contribute to the Zn(2+) site. Residue H697 is the Proton donor of the active site. Residue C729 participates in Zn(2+) binding.

It belongs to the vitamin-B12 independent methionine synthase family. It depends on Zn(2+) as a cofactor.

It catalyses the reaction 5-methyltetrahydropteroyltri-L-glutamate + L-homocysteine = tetrahydropteroyltri-L-glutamate + L-methionine. It functions in the pathway amino-acid biosynthesis; L-methionine biosynthesis via de novo pathway; L-methionine from L-homocysteine (MetE route): step 1/1. Functionally, catalyzes the transfer of a methyl group from 5-methyltetrahydrofolate to homocysteine resulting in methionine formation. The protein is 5-methyltetrahydropteroyltriglutamate--homocysteine methyltransferase of Yersinia pseudotuberculosis serotype I (strain IP32953).